Here is a 164-residue protein sequence, read N- to C-terminus: Transcriptional repressor NrdR (164 aa).

Residues 3-34 (CPFCSAQDTKVIDSRLVADGVQIRRRRECLSC) fold into a zinc finger. The ATP-cone domain maps to 49-139 (PRLVKTDGTR…VYRSFQDISE (91 aa)).

The protein belongs to the NrdR family. It depends on Zn(2+) as a cofactor.

In terms of biological role, negatively regulates transcription of bacterial ribonucleotide reductase nrd genes and operons by binding to NrdR-boxes. This Alcanivorax borkumensis (strain ATCC 700651 / DSM 11573 / NCIMB 13689 / SK2) protein is Transcriptional repressor NrdR.